The following is a 595-amino-acid chain: Elongation factor 4 (595 aa).

In terms of domain architecture, tr-type G spans 2–183; sequence KNIRNFCIIA…TIVEKVPAPK (182 aa). Residues 14–19 and 130–133 each bind GTP; these read DHGKST and NKID.

It belongs to the TRAFAC class translation factor GTPase superfamily. Classic translation factor GTPase family. LepA subfamily.

It is found in the cell inner membrane. It carries out the reaction GTP + H2O = GDP + phosphate + H(+). In terms of biological role, required for accurate and efficient protein synthesis under certain stress conditions. May act as a fidelity factor of the translation reaction, by catalyzing a one-codon backward translocation of tRNAs on improperly translocated ribosomes. Back-translocation proceeds from a post-translocation (POST) complex to a pre-translocation (PRE) complex, thus giving elongation factor G a second chance to translocate the tRNAs correctly. Binds to ribosomes in a GTP-dependent manner. This Parabacteroides distasonis (strain ATCC 8503 / DSM 20701 / CIP 104284 / JCM 5825 / NCTC 11152) protein is Elongation factor 4.